We begin with the raw amino-acid sequence, 127 residues long: Holo-[acyl-carrier-protein] synthase (127 aa).

D7 and E53 together coordinate Mg(2+).

Belongs to the P-Pant transferase superfamily. AcpS family. It depends on Mg(2+) as a cofactor.

The protein resides in the cytoplasm. The catalysed reaction is apo-[ACP] + CoA = holo-[ACP] + adenosine 3',5'-bisphosphate + H(+). In terms of biological role, transfers the 4'-phosphopantetheine moiety from coenzyme A to a Ser of acyl-carrier-protein. The chain is Holo-[acyl-carrier-protein] synthase from Herpetosiphon aurantiacus (strain ATCC 23779 / DSM 785 / 114-95).